Consider the following 311-residue polypeptide: Olfactory receptor 287 (311 aa).

Residues 1 to 27 lie on the Extracellular side of the membrane; sequence MAWSTGQNLSTPGPFILLGFPGPRSMR. Asparagine 8 carries an N-linked (GlcNAc...) asparagine glycan. The helical transmembrane segment at 28 to 53 threads the bilayer; the sequence is IGLFLLFLVMYLLTVVGNLAIISLVG. Residues 54–60 are Cytoplasmic-facing; the sequence is AHRCLQT. Residues 61–82 form a helical membrane-spanning segment; that stretch reads PMYFFLCNLSFLEIWFTTACVP. The Extracellular segment spans residues 83-103; it reads KTLATFAPRGGVISLAGCATQ. Cysteine 100 and cysteine 192 form a disulfide bridge. Residues 104–123 form a helical membrane-spanning segment; sequence MYFVFSLGCTEYFLLAVMAY. Topologically, residues 124 to 142 are cytoplasmic; the sequence is DRYLAICLPLRYGGIMTPG. The chain crosses the membrane as a helical span at residues 143 to 161; sequence LAMRLALGSWLCGFSAITV. The Extracellular portion of the chain corresponds to 162 to 199; sequence PATLIARLSFCGSRVINHFFCDISPWIVLSCTDTQVVE. A helical transmembrane segment spans residues 200–222; it reads LVSFGIAFCVILGSCGITLVSYA. Residues 223–239 are Cytoplasmic-facing; that stretch reads YIITTIIKIPSARGRHR. Residues 240–263 traverse the membrane as a helical segment; that stretch reads AFSTCSSHLTVVLIWYGSTIFLHV. Topologically, residues 264–275 are extracellular; it reads RTSVESSLDLTK. The chain crosses the membrane as a helical span at residues 276–295; that stretch reads AITVLNTIVTPVLNPFIYTL. Topologically, residues 296-311 are cytoplasmic; that stretch reads RNKDVKEALRRTVKGK.

It belongs to the G-protein coupled receptor 1 family. Olfactory epithelium.

It is found in the cell membrane. Its function is as follows. Odorant receptor. This chain is Olfactory receptor 287 (Olr287), found in Rattus norvegicus (Rat).